A 579-amino-acid chain; its full sequence is Salivary alpha-glucosidase (579 aa).

Positions 1–18 (MKIFVPLLSFLLAGLTTG) are cleaved as a signal peptide. Ca(2+)-binding residues include Asp37, Asp39, Asp41, Ile43, Asp45, and Asn118. N-linked (GlcNAc...) asparagine glycosylation is found at Asn118 and Asn151. Position 189 (Asp189) interacts with Ca(2+). Asp219 serves as the catalytic Nucleophile. Tyr223, Leu224, and Glu226 together coordinate Ca(2+). A glycan (N-linked (GlcNAc...) asparagine) is linked at Asn282. Glu290 serves as the catalytic Proton donor. Residues Asn304, Asn325, and Asn401 are each glycosylated (N-linked (GlcNAc...) asparagine). Asn325 contacts N-acetyl-beta-D-glucosamine.

This sequence belongs to the glycosyl hydrolase 13 family. In terms of tissue distribution, saliva (at protein level). Proximal lateral lobes of the salivary gland (at protein level).

Its subcellular location is the secreted. The catalysed reaction is Hydrolysis of terminal, non-reducing (1-&gt;4)-linked alpha-D-glucose residues with release of alpha-D-glucose.. Its function is as follows. Functions as a glucosidase that shows high activity toward sucrose, a major component of nectar. Assists the mosquito in its sugar-feeding capabilities. The polypeptide is Salivary alpha-glucosidase (Aedes aegypti (Yellowfever mosquito)).